A 352-amino-acid polypeptide reads, in one-letter code: Nodal homolog 4-B (352 aa).

The first 18 residues, 1–18 (MHLYFSCFILLFVPGGKS), serve as a signal peptide directing secretion. The propeptide occupies 19-278 (LGINSHLKHM…TIANSRRHRR (260 aa)). 4 N-linked (GlcNAc...) asparagine glycosylation sites follow: N30, N37, N199, and N238. Residues 197 to 223 (GKNHSEGHMKQPKKLHRAKSAERRYQQ) are disordered.

It belongs to the TGF-beta family. In terms of assembly, homodimer; disulfide-linked.

The protein resides in the secreted. Cooperation and regulatory loops of multiple nodals are essential for mesendoderm patterning in early embryos. Plays a role in mesoderm formation and may be required for neural development. The chain is Nodal homolog 4-B (nodal4-b) from Xenopus laevis (African clawed frog).